The chain runs to 151 residues: Transcription elongation factor GreA (151 aa).

Positions 41–62 (AEYHAAREKQSFIEGRIKELEA) form a coiled coil.

It belongs to the GreA/GreB family.

In terms of biological role, necessary for efficient RNA polymerase transcription elongation past template-encoded arresting sites. The arresting sites in DNA have the property of trapping a certain fraction of elongating RNA polymerases that pass through, resulting in locked ternary complexes. Cleavage of the nascent transcript by cleavage factors such as GreA or GreB allows the resumption of elongation from the new 3'terminus. GreA releases sequences of 2 to 3 nucleotides. This Cereibacter sphaeroides (strain ATCC 17023 / DSM 158 / JCM 6121 / CCUG 31486 / LMG 2827 / NBRC 12203 / NCIMB 8253 / ATH 2.4.1.) (Rhodobacter sphaeroides) protein is Transcription elongation factor GreA.